The following is a 529-amino-acid chain: Heat shock protein 60 (529 aa).

The tract at residues 460–484 is disordered; that stretch reads YQATVQHPPPQSSYEEDGRRPPTQP.

This chain is Heat shock protein 60, found in Giardia intestinalis (Giardia lamblia).